Here is a 92-residue protein sequence, read N- to C-terminus: Dolichol-phosphate mannosyltransferase subunit 3 (92 aa).

The next 2 helical transmembrane spans lie at 8 to 28 and 37 to 57; these read LWAL…ALGL and VLWP…LGTV.

Belongs to the DPM3 family. Component of the dolichol-phosphate mannose (DPM) synthase complex composed of DPM1, DPM2 and DPM3; within the complex, associates with DPM1 via its C-terminal domain and with DPM2 via its N-terminal portion. This interaction stabilizes DPM1 protein.

The protein localises to the endoplasmic reticulum membrane. The protein operates within protein modification; protein glycosylation. Functionally, stabilizer subunit of the dolichol-phosphate mannose (DPM) synthase complex; tethers catalytic subunit DPM1 to the endoplasmic reticulum. The polypeptide is Dolichol-phosphate mannosyltransferase subunit 3 (DPM3) (Bos taurus (Bovine)).